The primary structure comprises 137 residues: Large-conductance mechanosensitive channel (137 aa).

A run of 3 helical transmembrane segments spans residues 15-35 (IDLAIGVIIGGAFGGLVNSIV), 38-58 (ILMPIIGFITGGIDFSNMFIQ), and 80-100 (GNFITLLINFLIIAWVLFLFV).

Belongs to the MscL family. As to quaternary structure, homopentamer.

The protein localises to the cell inner membrane. In terms of biological role, channel that opens in response to stretch forces in the membrane lipid bilayer. May participate in the regulation of osmotic pressure changes within the cell. The protein is Large-conductance mechanosensitive channel of Bartonella quintana (strain Toulouse) (Rochalimaea quintana).